A 509-amino-acid chain; its full sequence is Transcription factor SOX-9 (509 aa).

2 disordered regions span residues 1–67 (MNLL…SEED) and 160–273 (RLRV…FRDV). The segment covering 30–41 (SAGSPCPSGSGS) has biased composition (low complexity). The segment covering 42-52 (DTENTRPQENT) has biased composition (polar residues). Composition is skewed to basic and acidic residues over residues 56–67 (GEPDLKKESEED) and 160–174 (RLRV…DYKY). The tract at residues 63 to 103 (ESEEDKFPVCIREAVSQVLKGYDWTLVPMPVRVNGSSKNKP) is dimerization (DIM). Positions 63-103 (ESEEDKFPVCIREAVSQVLKGYDWTLVPMPVRVNGSSKNKP) are PQA. A Phosphoserine modification is found at Ser64. The segment at residues 105–173 (VKRPMNAFMV…QHKKDHPDYK (69 aa)) is a DNA-binding region (HMG box). A Phosphoserine modification is found at Ser211. Positions 224 to 307 (PGEHSGQSQG…LPPNGHPGVP (84 aa)) are transactivation domain (TAM). Short sequence motifs (9aaTAD) lie at residues 275–284 (IGELSSDVIS) and 290–298 (DVNEFDQYL). Residues 334–415 (VWMSKQQAPP…HYSEQQQHSP (82 aa)) are disordered. The span at 341 to 376 (APPPPPQQPPQAPPAPQAPPQPQAAPPQQPAAPPQQ) shows a compositional bias: pro residues. Positions 380-415 (HTLTTLSSEPGQSQRTHIKTEQLSPSHYSEQQQHSP) are enriched in polar residues. A transactivation domain (TAC) region spans residues 394–509 (RTHIKTEQLS…QPVYTQLTRP (116 aa)). Lys398 is covalently cross-linked (Glycyl lysine isopeptide (Lys-Gly) (interchain with G-Cter in ubiquitin)). Positions 460–468 (TGLYSTFTY) match the 9aaTAD 3 motif. The tract at residues 479–509 (PIADTSGVPSIPQTHSPQHWEQPVYTQLTRP) is disordered. Positions 485 to 509 (GVPSIPQTHSPQHWEQPVYTQLTRP) are enriched in polar residues.

In terms of assembly, homodimer; homodimerization is required for activity. Interacts (via C-terminus) with ZNF219; forming a complex that binds to the COL2A1 promoter and activates COL2A1 expression. Interacts with DDRGK1. Interacts with EP300/p300. Interacts with beta-catenin (CTNNB1); inhibiting CTNNB1 activity by competing with the binding sites of TCF/LEF within CTNNB1. In terms of processing, acetylated; acetylation impairs nuclear localization and ability to transactivate expression of target genes. Deacetylated by SIRT1. Post-translationally, phosphorylation at Ser-64 and Ser-211 by PKA increases transcriptional activity and may help delay chondrocyte maturation downstream of PTHLH/PTHrP signaling. Phosphorylation at either Ser-64 or Ser-211 is required for sumoylation, but phosphorylation is not dependent on sumoylation. Phosphorylated on tyrosine residues; tyrosine dephosphorylation by PTPN11/SHP2 blocks SOX9 phosphorylation by PKA and subsequent SUMOylation. Sumoylated; phosphorylation at either Ser-64 or Ser-211 is required for sumoylation. Sumoylation is induced by BMP signaling pathway. In terms of processing, ubiquitinated; ubiquitination leads to proteasomal degradation and is negatively regulated by DDRGK1.

The protein resides in the nucleus. In terms of biological role, transcription factor that plays a key role in chondrocytes differentiation and skeletal development. Specifically binds the 5'-ACAAAG-3' DNA motif present in enhancers and super-enhancers and promotes expression of genes important for chondrogenesis, including cartilage matrix protein-coding genes COL2A1, COL4A2, COL9A1, COL11A2 and ACAN, SOX5 and SOX6. Also binds to some promoter regions. Plays a central role in successive steps of chondrocyte differentiation. Absolutely required for precartilaginous condensation, the first step in chondrogenesis during which skeletal progenitors differentiate into prechondrocytes. Together with SOX5 and SOX6, required for overt chondrogenesis when condensed prechondrocytes differentiate into early stage chondrocytes, the second step in chondrogenesis. Later, required to direct hypertrophic maturation and block osteoblast differentiation of growth plate chondrocytes: maintains chondrocyte columnar proliferation, delays prehypertrophy and then prevents osteoblastic differentiation of chondrocytes by lowering beta-catenin (CTNNB1) signaling and RUNX2 expression. Also required for chondrocyte hypertrophy, both indirectly, by keeping the lineage fate of chondrocytes, and directly, by remaining present in upper hypertrophic cells and transactivating COL10A1 along with MEF2C. Low lipid levels are the main nutritional determinant for chondrogenic commitment of skeletal progenitor cells: when lipids levels are low, FOXO (FOXO1 and FOXO3) transcription factors promote expression of SOX9, which induces chondrogenic commitment and suppresses fatty acid oxidation. Mechanistically, helps, but is not required, to remove epigenetic signatures of transcriptional repression and deposit active promoter and enhancer marks at chondrocyte-specific genes. Acts in cooperation with the Hedgehog pathway-dependent GLI (GLI1 and GLI3) transcription factors. In addition to cartilage development, also acts as a regulator of proliferation and differentiation in epithelial stem/progenitor cells: involved in the lung epithelium during branching morphogenesis, by balancing proliferation and differentiation and regulating the extracellular matrix. Controls epithelial branching during kidney development. The sequence is that of Transcription factor SOX-9 (SOX9) from Callithrix jacchus (White-tufted-ear marmoset).